A 281-amino-acid polypeptide reads, in one-letter code: Phosphonates import ATP-binding protein PhnC (281 aa).

The region spanning 2-245 is the ABC transporter domain; the sequence is FELKDVTRRF…AVKEIYGTDK (244 aa). An ATP-binding site is contributed by 34–41; the sequence is GRSGAGKS.

The protein belongs to the ABC transporter superfamily. Phosphonates importer (TC 3.A.1.9.1) family. As to quaternary structure, the complex is composed of two ATP-binding proteins (PhnC), two transmembrane proteins (PhnE) and a solute-binding protein (PhnD).

It is found in the cell inner membrane. The enzyme catalyses phosphonate(out) + ATP + H2O = phosphonate(in) + ADP + phosphate + H(+). In terms of biological role, part of the ABC transporter complex PhnCDE involved in phosphonates import. Responsible for energy coupling to the transport system. This chain is Phosphonates import ATP-binding protein PhnC, found in Rhizobium etli (strain ATCC 51251 / DSM 11541 / JCM 21823 / NBRC 15573 / CFN 42).